The chain runs to 353 residues: Guanine nucleotide-binding protein subunit alpha (353 aa).

The disordered stretch occupies residues 1 to 26 (MGCGMSVEEKEGKARNEEIENQLKRD). A lipid anchor (N-myristoyl glycine) is attached at Gly2. Cys3 is lipidated: S-palmitoyl cysteine. Over residues 7-26 (VEEKEGKARNEEIENQLKRD) the composition is skewed to basic and acidic residues. Residues 32-353 (NEIKMLLLGA…QENLRLCGLI (322 aa)) form the G-alpha domain. Positions 35–48 (KMLLLGAGESGKST) are G1 motif. Residues Glu43, Ser44, Gly45, Lys46, Ser47, Thr48, Asp150, Leu175, Thr181, Gly203, Asn269, Lys270, Asp272, and Ala325 each coordinate GTP. Ser47 contacts Mg(2+). The interval 173-181 (DVLRSRVKT) is G2 motif. Position 181 (Thr181) interacts with Mg(2+). Residues 196–205 (YRMFDVGGQR) form a G3 motif region. A G4 motif region spans residues 265-272 (ILFLNKID). The tract at residues 323-328 (TCATDT) is G5 motif.

It belongs to the G-alpha family. G(q) subfamily. In terms of assembly, g proteins are composed of 3 units; alpha, beta and gamma. The alpha chain contains the guanine nucleotide binding site. It depends on Mg(2+) as a cofactor.

In terms of biological role, guanine nucleotide-binding proteins (G proteins) are involved as modulators or transducers in various transmembrane signaling systems. This chain is Guanine nucleotide-binding protein subunit alpha (SSG-1), found in Sporothrix schenckii (strain ATCC 58251 / de Perez 2211183) (Rose-picker's disease fungus).